Reading from the N-terminus, the 83-residue chain is Kunitz-type serine protease inhibitor (83 aa).

Residues 1-25 (MSSGRLLLLLGLLTLWAELTPVSGL) form the signal peptide. The region spanning 31 to 81 (CELPPEPGLCNARKTFFYYSLHSHACQKFIYGGCGGNANKFKTIDECHRTC) is the BPTI/Kunitz inhibitor domain. 3 disulfide bridges follow: C31–C81, C40–C64, and C56–C77.

Expressed by the venom gland.

It is found in the secreted. Serine protease inhibitor that inhibits chymotrypsin (Ki=3520 nM). The chain is Kunitz-type serine protease inhibitor from Ophiophagus hannah (King cobra).